The chain runs to 114 residues: Phosphoribosyl-AMP cyclohydrolase (114 aa).

A Mg(2+)-binding site is contributed by D76. Position 77 (C77) interacts with Zn(2+). Mg(2+) is bound by residues D78 and D80. Positions 93 and 100 each coordinate Zn(2+).

Belongs to the PRA-CH family. Homodimer. It depends on Mg(2+) as a cofactor. Requires Zn(2+) as cofactor.

The protein resides in the cytoplasm. It catalyses the reaction 1-(5-phospho-beta-D-ribosyl)-5'-AMP + H2O = 1-(5-phospho-beta-D-ribosyl)-5-[(5-phospho-beta-D-ribosylamino)methylideneamino]imidazole-4-carboxamide. Its pathway is amino-acid biosynthesis; L-histidine biosynthesis; L-histidine from 5-phospho-alpha-D-ribose 1-diphosphate: step 3/9. Its function is as follows. Catalyzes the hydrolysis of the adenine ring of phosphoribosyl-AMP. The protein is Phosphoribosyl-AMP cyclohydrolase of Streptococcus sanguinis (strain SK36).